Here is a 488-residue protein sequence, read N- to C-terminus: 3-octaprenyl-4-hydroxybenzoate carboxy-lyase (488 aa).

Asn-172 contributes to the Mn(2+) binding site. Residues 175–177 (IYR), 189–191 (RWL), and 194–195 (RG) each bind prenylated FMN. Glu-238 contacts Mn(2+). The active-site Proton donor is Asp-287.

This sequence belongs to the UbiD family. As to quaternary structure, homohexamer. Prenylated FMN is required as a cofactor. The cofactor is Mn(2+).

Its subcellular location is the cell membrane. It carries out the reaction a 4-hydroxy-3-(all-trans-polyprenyl)benzoate + H(+) = a 2-(all-trans-polyprenyl)phenol + CO2. It participates in cofactor biosynthesis; ubiquinone biosynthesis. Functionally, catalyzes the decarboxylation of 3-octaprenyl-4-hydroxy benzoate to 2-octaprenylphenol, an intermediate step in ubiquinone biosynthesis. This chain is 3-octaprenyl-4-hydroxybenzoate carboxy-lyase, found in Pseudomonas syringae pv. tomato (strain ATCC BAA-871 / DC3000).